A 360-amino-acid chain; its full sequence is Phenylalanine--tRNA ligase alpha subunit (360 aa).

Mg(2+) is bound at residue glutamate 260.

Belongs to the class-II aminoacyl-tRNA synthetase family. Phe-tRNA synthetase alpha subunit type 1 subfamily. Tetramer of two alpha and two beta subunits. Mg(2+) serves as cofactor.

The protein localises to the cytoplasm. It catalyses the reaction tRNA(Phe) + L-phenylalanine + ATP = L-phenylalanyl-tRNA(Phe) + AMP + diphosphate + H(+). This is Phenylalanine--tRNA ligase alpha subunit from Methylobacterium nodulans (strain LMG 21967 / CNCM I-2342 / ORS 2060).